The chain runs to 944 residues: Leucine--tRNA ligase 2 (944 aa).

The 'HIGH' region motif lies at 36–46 (PYPNSPWHIGH). The 'KMSKS' region motif lies at 623–627 (KMSKS). Residue Lys-626 coordinates ATP.

It belongs to the class-I aminoacyl-tRNA synthetase family.

The protein resides in the cytoplasm. It catalyses the reaction tRNA(Leu) + L-leucine + ATP = L-leucyl-tRNA(Leu) + AMP + diphosphate. The sequence is that of Leucine--tRNA ligase 2 from Saccharolobus solfataricus (strain ATCC 35092 / DSM 1617 / JCM 11322 / P2) (Sulfolobus solfataricus).